A 215-amino-acid polypeptide reads, in one-letter code: [PSI+] inducibility protein 3 (215 aa).

Serine 2 is modified (N-acetylserine). 2 positions are modified to phosphoserine: serine 52 and serine 55. The SH3 domain maps to 54-113 (ASLEYVEALYQFDPQQDGDLGLKPGDKVQLLEKLSPEWYKGSCNGRTGIFPANYVKPAFS). A Glycyl lysine isopeptide (Lys-Gly) (interchain with G-Cter in ubiquitin) cross-link involves residue lysine 80. The segment at 114–189 (GSNGPSNLPP…HQSSHSHLKS (76 aa)) is disordered. A PY motif motif is present at residues 124–127 (PPQY).

Belongs to the LSB1 family. Interacts with LAS17, RSP5 and SUP35. Post-translationally, ubiquitinated by RSP5. Ubiquitination reduces the protein abundance and its prion-inducing ability.

Its subcellular location is the cytoplasm. The protein resides in the nucleus. The protein localises to the cytoskeleton. It is found in the actin patch. Functionally, overproduction promotes the de novo induction of the [PSI+] prion form of SUP35. The prion-inducing effect depends on the association with the actin cytoskeleton. Also implicated in prion maintenance during heat stress. The chain is [PSI+] inducibility protein 3 (PIN3) from Saccharomyces cerevisiae (strain ATCC 204508 / S288c) (Baker's yeast).